Here is a 201-residue protein sequence, read N- to C-terminus: MTAPIAGPEIERLIHLLARLPGLGPRSARRAALHLIRKRTELLGPLAEALQQAYNHLIPCQICGNIDTRDPCTICADAKRDPTLLVVVETVADLWALERAAALPARYHVLGGTLSPLDGVGPKDLNLQSLTERVAQGEIREVILAVNATVDGQTTAHYITDSLAAFPVKITRLAHGVPVGGELDYLDEGTLAAALRSRTNF.

The C4-type zinc finger occupies 60–75 (CQICGNIDTRDPCTIC). Residues 83 to 178 (TLLVVVETVA…KITRLAHGVP (96 aa)) enclose the Toprim domain.

This sequence belongs to the RecR family.

Its function is as follows. May play a role in DNA repair. It seems to be involved in an RecBC-independent recombinational process of DNA repair. It may act with RecF and RecO. This chain is Recombination protein RecR, found in Beijerinckia indica subsp. indica (strain ATCC 9039 / DSM 1715 / NCIMB 8712).